A 114-amino-acid chain; its full sequence is Nucleoid-associated protein PCC7424_2224 (114 aa).

This sequence belongs to the YbaB/EbfC family. As to quaternary structure, homodimer.

It is found in the cytoplasm. Its subcellular location is the nucleoid. Binds to DNA and alters its conformation. May be involved in regulation of gene expression, nucleoid organization and DNA protection. The polypeptide is Nucleoid-associated protein PCC7424_2224 (Gloeothece citriformis (strain PCC 7424) (Cyanothece sp. (strain PCC 7424))).